The primary structure comprises 396 residues: Actin-related protein 6 (396 aa).

N-acetylthreonine is present on Thr2. An N6-acetyllysine modification is found at Lys260.

The protein belongs to the actin family. ARP6 subfamily. As to quaternary structure, component of the chromatin-remodeling SRCAP complex composed of at least SRCAP, DMAP1, RUVBL1, RUVBL2, ACTL6A, YEATS4, ACTR6 and ZNHIT1. Interacts with CBX1, CBX3 and CBX5.

The protein resides in the cytoplasm. It localises to the cytoskeleton. Its subcellular location is the nucleus. It is found in the nucleolus. Required for formation and/or maintenance of proper nucleolar structure and function. Plays a dual role in the regulation of ribosomal DNA (rDNA) transcription. In the presence of high glucose, maintains active rDNA transcription through H2A.Z deposition and under glucose starvation, is required for the repression of rDNA transcription, and this function may be independent of H2A.Z. The protein is Actin-related protein 6 (Actr6) of Mus musculus (Mouse).